The primary structure comprises 379 residues: Protein-glutamate methylesterase/protein-glutamine glutaminase (379 aa).

The region spanning 4–121 is the Response regulatory domain; that stretch reads KILVVDDSIF…AANRQDAVAL (118 aa). Asp-55 carries the 4-aspartylphosphate modification. A CheB-type methylesterase domain is found at 186 to 379; it reads SGKKYRCLAI…FESHILKEMA (194 aa). Residues Ser-198, His-225, and Asp-323 contribute to the active site.

It belongs to the CheB family. Post-translationally, phosphorylated by CheA. Phosphorylation of the N-terminal regulatory domain activates the methylesterase activity.

It is found in the cytoplasm. It carries out the reaction [protein]-L-glutamate 5-O-methyl ester + H2O = L-glutamyl-[protein] + methanol + H(+). The catalysed reaction is L-glutaminyl-[protein] + H2O = L-glutamyl-[protein] + NH4(+). Its function is as follows. Involved in chemotaxis. Part of a chemotaxis signal transduction system that modulates chemotaxis in response to various stimuli. Catalyzes the demethylation of specific methylglutamate residues introduced into the chemoreceptors (methyl-accepting chemotaxis proteins or MCP) by CheR. Also mediates the irreversible deamidation of specific glutamine residues to glutamic acid. The protein is Protein-glutamate methylesterase/protein-glutamine glutaminase of Pseudoalteromonas atlantica (strain T6c / ATCC BAA-1087).